Here is a 132-residue protein sequence, read N- to C-terminus: Interleukin-13 (132 aa).

The signal sequence occupies residues 1-18; the sequence is MALLLTAVIVLICFGGLT. N-linked (GlcNAc...) asparagine glycosylation is found at N38, N49, N57, and N75. 2 cysteine pairs are disulfide-bonded: C48–C76 and C64–C90.

Belongs to the IL-4/IL-13 family. As to quaternary structure, interacts with IL13RA2.

The protein localises to the secreted. In terms of biological role, cytokine that plays important roles in allergic inflammation and immune response to parasite infection. Synergizes with IL2 in regulating interferon-gamma synthesis. Stimulates B-cell proliferation, and activation of eosinophils, basophils, and mast cells. Plays an important role in controlling IL33 activity by modulating the production of transmembrane and soluble forms of interleukin-1 receptor-like 1/IL1RL1. Displays the capacity to antagonize Th1-driven proinflammatory immune response and downregulates synthesis of many proinflammatory cytokines including IL1, IL6, IL10, IL12 and TNF-alpha through a mechanism that partially involves suppression of NF-kappa-B. Also functions on nonhematopoietic cells, including endothelial cells where it induces vascular cell adhesion protein 1/VCAM1, which is important in the recruitment of eosinophils. Exerts its biological effects through its receptors which comprises the IL4R chain and the IL13RA1 chain, to activate JAK1 and TYK2, leading to the activation of STAT6. Aside from IL13RA1, another receptor IL13RA2 acts as a high affinity decoy for IL13 and mediates internalization and depletion of extracellular IL13. The sequence is that of Interleukin-13 (IL13) from Bos taurus (Bovine).